The primary structure comprises 141 residues: Small ribosomal subunit protein eS12 (141 aa).

The protein belongs to the eukaryotic ribosomal protein eS12 family. Component of the small ribosomal subunit. Mature ribosomes consist of a small (40S) and a large (60S) subunit. The 40S subunit contains about 32 different proteins and 1 molecule of RNA (18S). The 60S subunit contains about 42 different proteins and 3 molecules of RNA (28S, 5.8S and 5S).

The protein localises to the cytoplasm. Component of the ribosome, a large ribonucleoprotein complex responsible for the synthesis of proteins in the cell. The small ribosomal subunit (SSU) binds messenger RNAs (mRNAs) and translates the encoded message by selecting cognate aminoacyl-transfer RNA (tRNA) molecules. The large subunit (LSU) contains the ribosomal catalytic site termed the peptidyl transferase center (PTC), which catalyzes the formation of peptide bonds, thereby polymerizing the amino acids delivered by tRNAs into a polypeptide chain. The nascent polypeptides leave the ribosome through a tunnel in the LSU and interact with protein factors that function in enzymatic processing, targeting, and the membrane insertion of nascent chains at the exit of the ribosomal tunnel. The sequence is that of Small ribosomal subunit protein eS12 from Plasmodium falciparum (isolate 3D7).